Reading from the N-terminus, the 254-residue chain is Tryptophan synthase alpha chain (254 aa).

Active-site proton acceptor residues include Glu-48 and Asp-59.

This sequence belongs to the TrpA family. Tetramer of two alpha and two beta chains.

It catalyses the reaction (1S,2R)-1-C-(indol-3-yl)glycerol 3-phosphate + L-serine = D-glyceraldehyde 3-phosphate + L-tryptophan + H2O. The protein operates within amino-acid biosynthesis; L-tryptophan biosynthesis; L-tryptophan from chorismate: step 5/5. Its function is as follows. The alpha subunit is responsible for the aldol cleavage of indoleglycerol phosphate to indole and glyceraldehyde 3-phosphate. The polypeptide is Tryptophan synthase alpha chain (Desulfotalea psychrophila (strain LSv54 / DSM 12343)).